The primary structure comprises 530 residues: Bifunctional purine biosynthesis protein PurH (530 aa).

Residues 1-148 (MNNARPIRRA…KNHKDVTIVV (148 aa)) form the MGS-like domain.

It belongs to the PurH family.

The catalysed reaction is (6R)-10-formyltetrahydrofolate + 5-amino-1-(5-phospho-beta-D-ribosyl)imidazole-4-carboxamide = 5-formamido-1-(5-phospho-D-ribosyl)imidazole-4-carboxamide + (6S)-5,6,7,8-tetrahydrofolate. The enzyme catalyses IMP + H2O = 5-formamido-1-(5-phospho-D-ribosyl)imidazole-4-carboxamide. The protein operates within purine metabolism; IMP biosynthesis via de novo pathway; 5-formamido-1-(5-phospho-D-ribosyl)imidazole-4-carboxamide from 5-amino-1-(5-phospho-D-ribosyl)imidazole-4-carboxamide (10-formyl THF route): step 1/1. It functions in the pathway purine metabolism; IMP biosynthesis via de novo pathway; IMP from 5-formamido-1-(5-phospho-D-ribosyl)imidazole-4-carboxamide: step 1/1. The chain is Bifunctional purine biosynthesis protein PurH from Vibrio atlanticus (strain LGP32) (Vibrio splendidus (strain Mel32)).